Consider the following 583-residue polypeptide: Threonine--tRNA ligase (583 aa).

The segment at 185–478 (DHRKLGRELN…LVEHYGGAFP (294 aa)) is catalytic. Zn(2+)-binding residues include Cys278, His329, and His455.

This sequence belongs to the class-II aminoacyl-tRNA synthetase family. Homodimer. It depends on Zn(2+) as a cofactor.

It localises to the cytoplasm. The catalysed reaction is tRNA(Thr) + L-threonine + ATP = L-threonyl-tRNA(Thr) + AMP + diphosphate + H(+). Its function is as follows. Catalyzes the attachment of threonine to tRNA(Thr) in a two-step reaction: L-threonine is first activated by ATP to form Thr-AMP and then transferred to the acceptor end of tRNA(Thr). Also edits incorrectly charged L-seryl-tRNA(Thr). The polypeptide is Threonine--tRNA ligase (Borrelia duttonii (strain Ly)).